Consider the following 101-residue polypeptide: uncharacterized protein (101 aa).

This is an uncharacterized protein from Saccharolobus islandicus (Sulfolobus islandicus).